Reading from the N-terminus, the 342-residue chain is MAGSGGLGGGAGDLQGAGTGQGTALRALRAPLALVVLLLSAYCLFALPGRCPPAARAPAPVPAPAEPPHTSLRLRAPGLPVASGPGRRRFPQALIVGVKKGGTRALLEFLRLHPDVRALGSEPHFFDRCYDRGLAWYRGLMPRTLDGQITMEKTPSYFVTQEAPRRIHGMSPDTKLIVVVRNPVTRAISDYAQTLSKTPGLPSFRALAFRHGLGPVDTAWSAVRIGLYAQHLDNWLRYFPLSHFLFVSGERLVSDPAGEVGRVQDFLGLKRVVTDKHFYFNATKGFPCLKKAQGSGRPRCLGKSKGRPHPRVPEAVVQRLQAFYRPFNRKFYQMTGQDFGWD.

Topologically, residues 1–31 (MAGSGGLGGGAGDLQGAGTGQGTALRALRAP) are cytoplasmic. Residues 32-49 (LALVVLLLSAYCLFALPG) form a helical; Signal-anchor for type II membrane protein membrane-spanning segment. The Lumenal segment spans residues 50 to 342 (RCPPAARAPA…QMTGQDFGWD (293 aa)). Positions 56-75 (RAPAPVPAPAEPPHTSLRLR) are disordered. Position 100 to 104 (100 to 104 (KGGTR)) interacts with 3'-phosphoadenylyl sulfate. Substrate contacts are provided by residues 122–128 (EPHFFDR) and 153–156 (KTPS). 3'-phosphoadenylyl sulfate is bound by residues Arg181 and Ser189. Residue 220–221 (WS) participates in substrate binding. Asn281 carries N-linked (GlcNAc...) asparagine glycosylation. Cysteines 288 and 300 form a disulfide. 3'-phosphoadenylyl sulfate is bound at residue 305-309 (KGRPH).

Belongs to the sulfotransferase 1 family. In terms of tissue distribution, expressed in liver and kidney, followed by heart, brain, lung and testis.

The protein localises to the golgi apparatus membrane. The catalysed reaction is alpha-D-glucosaminyl-[heparan sulfate](n) + 3'-phosphoadenylyl sulfate = 3-sulfo-alpha-D-glucosaminyl-[heparan sulfate](n) + adenosine 3',5'-bisphosphate + H(+). Sulfotransferase that utilizes 3'-phospho-5'-adenylyl sulfate (PAPS) to catalyze the transfer of a sulfo group to heparan sulfate. Unlike 3-OST-1, does not convert non-anticoagulant heparan sulfate to anticoagulant heparan sulfate. The chain is Heparan sulfate glucosamine 3-O-sulfotransferase 6 (Hs3st6) from Mus musculus (Mouse).